Consider the following 1379-residue polypeptide: ABC multidrug transporter MDR2 (1379 aa).

Residues 65-85 form a helical membrane-spanning segment; sequence IALIVIGTIAGIGAGIPFPLL. One can recognise an ABC transmembrane type-1 1 domain in the interval 69–367; that stretch reads VIGTIAGIGA…MAPFMHIFAS (299 aa). Asparagine 97 carries an N-linked (GlcNAc...) asparagine glycan. 5 helical membrane-spanning segments follow: residues 119 to 139, 193 to 213, 215 to 235, 301 to 321, and 336 to 356; these read VLQV…HTGC, KVGL…VAFL, VATI…MAFG, IQFG…FWQG, and VSVG…FVLS. Residues 403–682 form the ABC transporter 1 domain; it reads IELQDVTFNY…DGVYAGMVRL (280 aa). 438-445 is a binding site for ATP; sequence GTSGSGKS. N-linked (GlcNAc...) asparagine glycosylation is found at asparagine 552 and asparagine 633. Positions 738–758 are disordered; the sequence is YMPEEADSLPTEPENEKEKPK. The next 4 membrane-spanning stretches (helical) occupy residues 781-801, 820-840, 881-901, and 920-942; these read LGLI…VIFG, GMLF…AVIV, LLVA…GTTI, and VIAW…SGVL. Residues 781-1068 form the ABC transmembrane type-1 2 domain; sequence LGLITSIMIG…MFALVPDISK (288 aa). The N-linked (GlcNAc...) asparagine glycan is linked to asparagine 989. Helical transmembrane passes span 1008–1028 and 1032–1052; these read FWLS…YWWG and ILAG…LLFS. The ABC transporter 2 domain maps to 1135-1374; that stretch reads VQFRNVHFRY…CESYRANVIH (240 aa). 1170–1177 contacts ATP; the sequence is GPSGSGKS.

It belongs to the ABC transporter superfamily. ABCB family. Multidrug resistance exporter (TC 3.A.1.201) subfamily.

Its subcellular location is the cell membrane. Functionally, pleiotropic ABC efflux transporter that may be involved in the modulation susceptibility to a wide range of unrelated cytotoxic compounds. In Trichophyton interdigitale (strain MR816), this protein is ABC multidrug transporter MDR2.